The sequence spans 205 residues: FAS-associated death domain protein (205 aa).

The DED domain maps to 3–81; that stretch reads PFLVLLHSLS…RHDLLQRLDD (79 aa). One can recognise a Death domain in the interval 97 to 181; it reads LQVAFDIVCD…LVADLVEEAQ (85 aa). Positions 181–205 are disordered; that stretch reads QESVSKSENMSPVLRDSTVSSSETP. Position 191 is a phosphoserine (S191).

As to quaternary structure, can self-associate. Component of the AIM2 PANoptosome complex, a multiprotein complex that drives inflammatory cell death (PANoptosis). Component of the death-induced signaling complex (DISC) composed of cell surface receptor FAS/CD95 or TNFRSF1A, adapter protein FADD and the CASP8 protease; recruitment of CASP8 to the complex is required for processing of CASP8 into the p18 and p10 subunits. Interacts (via death domain) with FAS (via death domain). Interacts directly (via DED domain) with NOL3 (via CARD domain); inhibits death-inducing signaling complex (DISC) assembly by inhibiting the increase in FAS-FADD binding induced by FAS activation. Interacts with CFLAR, PEA15 and MBD4. When phosphorylated, part of a complex containing HIPK3 and FAS. May interact with MAVS/IPS1. Interacts with MOCV v-CFLAR protein and PIDD1. Interacts with RIPK1 and TRADD. Interacts with stimulated TNFRSF10B. Interacts with DDX24.

It is found in the cytoplasm. In terms of biological role, apoptotic adapter molecule that recruits caspases CASP8 or CASP10 to the activated FAS/CD95 or TNFRSF1A/TNFR-1 receptors. The resulting aggregate called the death-inducing signaling complex (DISC) performs CASP8 proteolytic activation. Active CASP8 initiates the subsequent cascade of caspases mediating apoptosis. Involved in interferon-mediated antiviral immune response, playing a role in the positive regulation of interferon signaling. This Mus musculus (Mouse) protein is FAS-associated death domain protein.